The chain runs to 7839 residues: MALLNGKSTLPNGHNSSIESPNGYTEHEMPIPSDWQRYLIDIDHAAVSLFKSPRPDDPVATVKSTHRFVLTEETLLVSIPSTIYAAFAIVMSEYSNSQDVLFGVRAESRVVPFRVLVDKNDQISSFLDQVASKWKMAQNFPPDMPVPAVPNVLAFVDDKMSASGNGLVLEENEEISMVISLDSKEITIQVLFNPACADLVAVQRFLKQLETVFHQLCKPSAGQLIKEVKSITADDIRDMTTWNSASMTPYTPECIHDVVKQHVLASPNSCAVHGWDGDLSYVQLDEESSRLANYLYRKGVRPHDLVPLAFYKSIWFTICALALSKLGAAIVPLDPQWPKDRQMYIINDIESSRIITNIPNSASAYAGLEIIDISQLSLANEPATARYPVTPEHAIYAYYTSGTTGQPKGCVIEHGAFVSSSSKRIKFMGRNKDSRLLQVTTYTFDVAMDDIFFTLMAGGCLCVPTREECLNDIVGAVEKYNCNTLHVAPSLARDLQPSQLPSLRTLILGGEAMSANILRTWAGRVGLYNSYGPTECCIACCVNLIQSADENPRNIGRPIDCSYWLVRPGDIDTLAAIGTVGEILIHGPNLGRGYLNKPELTAKAFPQNISWASEVGLPAEARFYRTGDLARFNADGSVCLLGRIDDQVKIHGQRIELGEIDYRLSQCLPAGIEAISGVVNFRDREVATLVAFIQTVNSDSNSAKSSGSLALADTDNWNQFHRLRSHVMEQLSHNLPSYMVPSVFLPVQNFLYFNQGKLNRRGMFQQASRFRLDDILTINTSAGHKADDTSSWSAEALVLRQLWAIALGLEEKNIHLDSRFADLGGDSLAAIRLGILCRPYDIELSVDDILQQSTILLQAEMSEKKKKQNIEKHEVAQEAILPAGQRFGLLGQDVDVGMLCEQTSAQCHIDSGAIDDIYPASPLQESLMALSMDDSPYISQFVFRLPDNLDMYRFRKAWKSTFSDIPILRTRIIYLQDFGTLQVVVDEDIEWTEHKNITLSQFLKDDQERLMQVGDRLVRFTIVQESPGTSFLVWTCHHACHDGRTVDQTLRVVGAKYLDRPVSSPVPYRYYIQFQQDVYRRDWQEYWTRNLAGASVSAFPAQDKAVHQPVTDASHQYSFSMPRISTERSDTSVFSPSSILRAAWALIVSRYEESEDVTFGTIVGANASTIADADAIVGPTNNTIPVRVLASEGWTVEAFVSHVKQQFEYSPFQHVGLANLKDLSPEMQDIVNIRNIFVVQSHFVGQTGSEMNLERVAVSAHEGFKYPLVVECFQENASQVLVNFIYDSHILDQSQISRLALQLENTINLLVHNPHKTLNQIEILSPSDVAQILEWQADMPSPSSLCLHQQFFTQVKRSPDAIALCTWEGQFTYLEVQNLVESMAIYLQDAGVRRGDRILCQIEKSACAVISFLAILKLGGTCVLLGTTWPRIRSEVIAEDTKAQYLLVSPTLSNALISLVPNILEVSTSFIQRLPRPTQYVDSVYQPSDLAFILFTSGSTGTPKGVQLAHSGLVTNFASMAQHMQYTSETRLFQFSDFTFDLSIYDIFGMLMVGGCICMPSEQERHEDLMGSMNRMKVNTVTATPSIAKMIKPSSVPTLRCIKLGGEALDSTTLATLAGSLDTENGYGVTECSVWSTCTDRLSPDADPRNVGRGINCYTWIVDAKNPNRLRPIGAVGELILQGPGVALGYVNKPEESKRVFLDALPWSTDKGRSYRTGDLVKYAPDGSLIYVQRKDAQLKIRGQRFESSEVESHLQQCGLPEGNFCVDLVKTQTGPVVVVFLCMNKEVEMKDASKLGVVPLDQQDSSIVDQMAQAMRMLIPRLPGYMIPQAVIPVTQMPVSNSGKLDRRALRSLADGMSPGQLRQLLRPSEDSIYHKRTELETEAERTMAVLWSQVLAIDDSHVFHTDDDFFQLGGHSIALMRLISAGKGHGMSISYRDAFLHPSLGAMSRQATVSDAEEHALPRLIQPFAMAPSDVDGLIQESSRACQVDPQDIVDLYPCTPFQESTMTLSLSKPGLYTAQFVWSLPDTIDLARLRSAWETLVRSDAILRTRLIYSSKYWQVVTRTGIDFALADMSIDSYLEEDKARPIRLGQPLNRLAIIQDQTSATQYLAWTAHHSTYDGHSWSSIQDRLSDLYTQGGSKLPLVPYNVFVDHIVNNPLPETGLSFWKDMMSGARMPSFPKLPLNNDLQSTNSVVTQSVSLPRQTSSDVTVASAIQGAWAILLGQYENSDDVLFAATLSGRNVPVDGIENIAGPTSCTVPMRVRTDPGQSTRSWLRSVQQSYVDAATYGQIGMNEISLVNKDAEVARHIRSLLIVQAITSKTVSGLERIGCTKIETKAKGFLSYALVVECKPSMENNEMEVMVSYDANLLDGPSVYRLVWQLEFTLQQLLSDNCKTIRDLCLISPSDMETISTWNKELPKTVETTVHALFDRRLSQKHSATAISSWDGEMTYVELDNYSSSLAAHLMASGVKPGQYIPLCFEKTMWMVVSMLAVLKAGGACVSLDPNHPSRHHQVILSRVSADIVITSPANKHRFPGNRVLSVSAALMTKIAHEPYAAPLVSAHQPAFVVFTSGTTGEPKGIILEHRALCTSIEAHGQFMEFGPESRVLQFASYTFDVSIAEMLTTLAFGGCICIPSDHARLNNLSGAIKTLRVNQAYLTASVAALLDPDTLNGSLKVLSVGGEQVGQEVLTRWGDRTKLLNMYGPAETTIWCGGKHSVKPDGDAANIGYGVGARMWLTDVNDVQKLAPIGAVGEIVIEGPLLARGYINGNNDVFVESPDWAKAFNVFDGFDQVTGRVYRSGDLGRYQSDGSIAICGRRDTQLKIRGQRVEVSQIEDQLQRLAPDFKCVVGVLRTDTPTLVAFIGLEGPTKDQGLTDSMDLVVRTRDLSEEVRDLMGSLESRLANILPPYSVPAHYLVLRNIPLMTSGKTDRKKLQVIASEHLEHSVDASKPQMLQQVKKIPTTQMEWNLFGLWAQVLGINNLASLGTDDNFFRCGGDSLKAMQLASLASQRGITLQVSDLFKNPVLADLAQAIVLDTPKEIETSPVQDIPDPYSLLPNDTKEQVQAQAALDCDVSPNLIDDIYPCTPLQDGLFALSQKQPGAYVAQFKFSVANRINIRRLRQAWETVCDQAPILRSRLVSTPSGIVQVVLTEDFWWYERHDIDTSAELEQDKAAIGGLGQPLQRFRLVQDVARGQKTLVWTIHHAAFDGWSIERILESVRLVYQDQPIPNPYVPFNAFIRYSSGIVENHESKEFWQSYLSNITPPTFPALPSPSYQALADTVIESKMSNLKLPDSFTLTSILRAAWAIVVSTYQGSDDVVFLTTVFGRNAPLAGIDKIIGPTITTIPIRVKLNDPSTTVDMLLQAVQESATETMAFEQLGLQSIRNLNADCKAACMAQNLLVIQTSRGEDATVPFGGFEKLPDETKGFSTIPFTLECTATSEGGLSIEASFDSKIVDPAQANRIIKTFEHVTQQMCHKHLKLNQVDLISDSDHDLIRNWNSTMPCAKEECIHHRLDRLAVSNPDAEAVCAWDGIFTFKELNSLSNRYAVYLQSQGIKPGNIVPFCFDKSKWVVVAMLAIMKVGAASVTVDPKHPPGRRDGILSAVSASAVVTTSGYTHLFDHNASHGLKTLVLDGKTMDSIADSLQPADIESTPNDAAFVVYTSGSTGTPKAVVIEHRGICTGAFHLAKLIHLGPQTRCLQFAAFTFDQSFGDIFHTLLLGGCVCIPSESDRLNDLVGSILRLRANTAILTPTVACSIDPSELGSHKMDVLTVGGEPVTAEAIRTWAPHVRLFNTYGPAECSVTTIGRPINMQNVTQPANIGRGLGALVWLTYPDDPERLTPIGTVGEILMEGPQLARGYLNDSRNTNAAYITDPAWSHRFPVPGMSTPRRFYRTGDLGQYQADGTIVCLGRRDSQVKLRGQRMELGEVEHHISTYSQSALEIIADVFTPPNGTATLAACISLKGYETKGDECQVEVDEQVLTIFSAMLSGLDSYLSRMLPAYMIPTLYVPVTHIPLTPSGKKDRKSIRLMLARITVDQVQKMRTILGESEPSRPLTEREKDLQQLWVKVLKLDGETVINANTNFFHSGGDSVRAMALVAAARRKGTHLTVAEIFSHPKLCDMAAMTTSLSQKGQPVQLAPYSLLRSTPSADTMSEACGACGVDHSQIQDMYPTTPLQQALVALSIKDSGAYVSNFVFLLPSHLDVELFQRAWECVYVVVSEKVRWNYGDNLEEFVGRQSQKGFKLGQRMAESAIVRQKDGKTFFILILHHAIYDGWSLRRLLEAAEQIYHGQAIPRFVIFNHFVAHVSRSEDNRAPAFWRSYLEGLPKTSFIQQPTTAYKPTADHIISQDVSLRDNFTARSGVTITSLMRAAWAMVLATYNSDQTPDVVFGTVVGGRSLDLADIEYIDGPTIATVPFRVTFDPTAPVDMLLQSVQTMSTQILQHEQFGVQNIIKVSDDGRLACDFETLLVVQDSAEIKASSGFLDMDNIYQRPDRPPGIPLVVECSPSAGNLHLEIHFDAKLLEETQAKRLIRQLAHVIKQLANSVPSLSLSCIDMMNPDDAEEIKSWNKKPPPTFDGCLHEMVLQHSKGCPDRIAIQSWDTSLTYSELDHLSSILAQYLNSLGVRPEDKVPFCMDKSAFAIVAMLAILRSGGCFVPLDMSSPTKRLKNIIKRVNAKFILVSPKTRPLFEDVEGQLVEVTKSMIDGLPELSKSLYIPSATHPAYVLFTSGSTGTPKGVVVEHGAIATSVSSFSSYLGFNPDVRVLQFAPYVFDVSIGEIFACLVSGGCLCIASESSLMDDLPLCIQQLDVNFAVLTPTFARTLTPSEVPSLKTLVLGGEPLRKRDVETWATTVRLFNGYGPTEASVLAMAYRVPDSQSPCNLIGLSVGCRSWIVSPSDPNILPPIGAVGELVLEGNTLARGYLDTESAQGAFIEDPKFLDSLVPEATGSRVYKTGDLVRYNAEGIVEFVSRKDTQVKFHGRRIELEDIEHNAMEAMPEAKHLVVELVRLGNSQQEALALFFHTDNQRTANEKDPILPIGQDLVARLRGVKSNLAVTLPSYMVPSLYIPLSTWPSTSNGKVNRHLLRNLVLHFTSEAAAAYSLHTGDSSALSSDEESQLAQLWATTLNIDARTIGSSDSFFQHGGDSIAAVRLVTLAREQGIGLSVDTLLSKPILRDMALCMTSAQPVRETIVRPFNQIHSHQEEVLLAASQFGVEPAMIEDIYPCSALQNSLMAVSLKNSSAYLSQFVVAIPEGLDIDVLQAAWNTVYSDSPILRTRFYQPSLNNMQHPILQAVVDQKPIWGTEENLDEFLGRDKQTPTGLGSPLTRFTIVVDKTNQERLFVLTAHHAIYDGWSIASTFEKVDMILKGIALPKSVGYNIFIHHLQSLNTQENKAFWSSTLEGATQTLFPQLPSHSYEPATDNSLKHQFAYPADLAPHSTVTMATIVRGAWGLLVSKYCDSPDVVFGTTVNGRMAPIPGIEMVQGPTMATIPFRTRISTNQSVLSYLEQLHVQQIESIPHEQYGLQNIKHLSEPIARVCEFQNLLVIQSSRDSSLSDSGFAFGTVKNMDQGSFSMQGFHNMALVVECSIDSEVIHVTLNFDSNVIPKTQVQRIAHHFEHLILQLQAGSTEPDLKIDQIDHVSPSDQAEILEWNSSIPGSVLCCVHELFESRARLQPSAPAICARDGQLTYFELQAKATTLAAYLSLQGLGRGVLVPLLFEKSCWAVVAMMAVLKAGAANVALNPEHPQARLEDSINATQGEVILCSRKHFELASSFDMQVIVVDEDLFHHIDLPSLASSDPWSPTYPAGPDDPCFVLFTSGTTGKPKGIVINHAAMCSSINGHSSTLRYSTGPGSRNFQFTAYTSDVSIGEIFTSLAVGSCVCVPSDYDRMNNLAGSMRDLNVTWAFLTPSVAALLKPEEVPCLRTLLFGGETATPENISTWADSLYLINSAGPAECCIWTHCNPGISTADIGSNWGYNLGCATWITDPNNPSVLMPIGVTGEMLIEGPNLAQGYLNDPERTQKSFVEIYLAGKKRRLYRTGDLARFMADGKTQFLGRRDTQVKLRGQRVEIGEIENQIRRHIPDSTLVAVEMVRIAEGKSAPLLAAFHAPKDPRAIDDTGDTPQAEVLSAAMVQELGVILDELAAKLAETLPQHMIPTAFIPLTSMPLTASAKTDRNVLSALASTISVEQLSYYALTSAEKQFPSSLAEQQMAKLWQEVLNTKIDIGIHDSFFRIGGDSISAMHLVSRSRAVGISLTVEQIFKNPTLQHMAAIATTFTESMGSTTVEPFSLISPTVTFDIVCSEAQEQCQVTAQQIQDIYPCSALQEGLLALSLKTAGSYLAQMVFEIPDELDLERFKDAWAHMVAKAAPILRTQFFESPSQGHQLMQAVIDAPLEWTYSDKLDEYLMTDSTKIVQLGQPTSRYAIISNTQRYFVFTAHHAVYDGASLGPMFEAVEKIYSENYVSSSSPYSLFVQYLLGMDSDSSKAYWEMSLQGASAPTFPRLPSIGYRPMTNDALKRTIALPARHDTEFTMSSIARAAWSLVVASYSDTDDIVFASTVGGRTLPIAGIENIIGPTLATVPVRVTIDRTASVSDFLTMIQEQSTSMMPHEQYGLQNIKRISPSVSAASDLHNLLVINTSSVEGLGSGGLGLKQVDLGRADGFHNFALSIECTAEADALSLAVSFDDHVIDPRQIRRVVNQFEHMLQQLSTCAIHTRLADMDLTGPADIAEIHLWNSHVPPPQQNYVHTLVEQRVKSQPDSPAVCSWEGELTYRELDELSSSLANHLITAFAVAPGTLIPILFEKSIWTVVTMLAVLKAGGANVPMDPQQPLARLQELAADIGASLAISSSKYQDKAQNVTARSMFVDREVLTTIEKTPICPASTVSYEDPAFILFTSGSTGKPKAILIDHTAFTSSIKGHGEILRYRKGSRNLQFTAYISDVSIGEIFTSLSAGACVCVPSDFERMNDLAGSINRMRVDWAFLTPSVASLLDATKVPSLKTLVFGGETATPENIAAWAPRLFLINSFGPAECSIWTHCDPGVGITHNGSHIGYAIGCATWIVDPNDYNKLAPIGSIGELIVEGPNVARGYLDEAKTKEAFLKTAAWMPSGRKNRLYKMGDLVRYLPDGKIQFLGRKDSQIKLHGQRIELGEIEHQLRVALAKHDADRNVQVAVEMVSLSTDTSTSSLLTAFVDYEGISSDDGPAQLSSGEKAQQWARQMFRVAHEHLALTLPRHMIPSVLLPLTRMPLNGSAKTDRKVLKQIVSGMDTMQRALYSLARVETNIIKAATPNEKTLHHIWSEILSISPESFGVEANFMSLGGDSIAAMKLIPIAQAAGLSISVEDLFTRPVLHDLARVSRQSITEHSQDIPPFYIMEQAQNQDELLAEASTHCNLPPDAIHDIYPCTQVQERFISTTQIQPGAYTLQDVFKISSDMDLAQFKKAWTRTVASHVALRTRIFLSNDRHQHLQVVQKASETLDWIHSENLEEYLKADKAKSMEYGGSLVRSAIVSEGVERHFVVTYHHSIYDAVSLGIIMNDLEAFYLDDLYEVNEPKYNAFVHHLTQVKSQELSSQFWRDHLAGDRSTITPLYQPVDGARVDSLLRHTITFPMHYQQSQLSLTVAAFTYAALSLVTARLTGSSSAVLELTLLGRSVPVKGIERMVGTTVTSAPLRIDTTAGNDKPWTVTVEDYLDYAKKRASSIVLHEHTSMPDPETKHITSAALPIVVHPSNPHKEALGTGIGLQRHEIQSMGQNSSAFYMDIAALDGEGLEINLPFDMPLDEVTRNVDHETDLRMCDIIEQEFRGYIILALVNRLNFVPSCWTMGRWLNEAPRSTY.

Residues 1–23 (MALLNGKSTLPNGHNSSIESPNG) are compositionally biased toward polar residues. The disordered stretch occupies residues 1–26 (MALLNGKSTLPNGHNSSIESPNGYTE). Residues 264–650 (LASPNSCAVH…LGRIDDQVKI (387 aa)) are adenylation 1. Positions 793–866 (SAEALVLRQL…LQAEMSEKKK (74 aa)) constitute a Carrier 1 domain. Position 827 is an O-(pantetheine 4'-phosphoryl)serine (S827). Positions 916-1332 (DIYPASPLQE…ILSPSDVAQI (417 aa)) are condensation 1. Positions 1351 to 1742 (FFTQVKRSPD…QRKDAQLKIR (392 aa)) are adenylation 2. The 78-residue stretch at 1880–1957 (ELETEAERTM…AMSRQATVSD (78 aa)) folds into the Carrier 2 domain. The residue at position 1918 (S1918) is an O-(pantetheine 4'-phosphoryl)serine. The segment at 1997–2413 (DLYPCTPFQE…LISPSDMETI (417 aa)) is condensation 2. The interval 2432–2828 (FDRRLSQKHS…GRRDTQLKIR (397 aa)) is adenylation 3. Residues 2963-3040 (IPTTQMEWNL…DLAQAIVLDT (78 aa)) enclose the Carrier 3 domain. S3001 carries the post-translational modification O-(pantetheine 4'-phosphoryl)serine. The segment at 3084-3496 (DIYPCTPLQD…QVDLISDSDH (413 aa)) is condensation 3. Residues 3520–3923 (RLAVSNPDAE…GRRDSQVKLR (404 aa)) are adenylation 4. A Carrier 4 domain is found at 4057 to 4134 (RPLTEREKDL…DMAAMTTSLS (78 aa)). S4095 carries the post-translational modification O-(pantetheine 4'-phosphoryl)serine. The interval 4234 to 4569 (NLEEFVGRQS…MMNPDDAEEI (336 aa)) is condensation 4. The adenylation 5 stretch occupies residues 4591 to 4982 (HSKGCPDRIA…VSRKDTQVKF (392 aa)). The Carrier 5 domain maps to 5113–5189 (ALSSDEESQL…DMALCMTSAQ (77 aa)). Position 5150 is an O-(pantetheine 4'-phosphoryl)serine (S5150). Residues 5224-5653 (EDIYPCSALQ…VSPSDQAEIL (430 aa)) are condensation 5. Positions 5671–6069 (FESRARLQPS…GRRDTQVKLR (399 aa)) are adenylation 6. Positions 6207 to 6282 (FPSSLAEQQM…HMAAIATTFT (76 aa)) constitute a Carrier 6 domain. S6243 carries the post-translational modification O-(pantetheine 4'-phosphoryl)serine. A condensation 6 region spans residues 6321 to 6730 (QDIYPCSALQ…RLADMDLTGP (410 aa)). The adenylation 7 stretch occupies residues 6756 to 7147 (EQRVKSQPDS…LGRKDSQIKL (392 aa)). The Carrier 7 domain maps to 7290-7366 (KAATPNEKTL…DLARVSRQSI (77 aa)). S7327 bears the O-(pantetheine 4'-phosphoryl)serine mark. Positions 7404–7704 (HDIYPCTQVQ…LDYAKKRASS (301 aa)) are condensation7.

It belongs to the NRP synthetase family.

It participates in mycotoxin biosynthesis. Its function is as follows. Nonribosomal peptide synthetase; part of the gene cluster that mediates the biosynthesis of gramillins A and B, bicyclic lipopeptides that induce cell death in maize leaves but not in wheat leaves. The nonribosomal peptide synthetase GRA1 incorporates respectively a glutamic adic (Glu), a leucine (Leu), a serine (Ser), a hydroxyglutamine (HOGln), a 2-amino decanoic acid, and 2 cysteins (CysB and CysA). The biosynthesis of 2-amino decanoic acid incorporated in gramillins could be initiated by a fatty acid synthase composed of the alpha and beta subunits FGSG_00036 and FGSG_11656. The cytochrome P450 monooxygenase FGSG_15680 could hydroxylate the fatty acid chain. Subsequent oxidation to the ketone by the oxidoreductase FGSG_00048 and transamination by aminotransferase FGSG_00049 could form 2-amino-decanoic acid. On the other hand, FGSG_15680 could also be responsible for the HO-modified glutamine at the gamma-position. Whether hydroxylation occurs on the fully assembled product or on the Gln residue prior to assembly into the gramillins requires further proof. The thioredoxin FGSG_00043 could also be required for the disulfide-bond formation between CysA and CysB. The specific involvement of the remaining proteins from the cluster is more difficult to discern, but could have broader regulatory (FGSG_00040 and FGSG_11657) or enzymatic functions (FGSG_00044 and FGSG_00045). The final C-domain of GRA1 does not possess the expected sequence of a termination CT domain, often implicated in macrocyclization and release of a cyclopeptidein fungal NRPs; and the thioesterase FGSG_00047 may act in concert with the terminal C-domain of GRA1 to catalyze the formation of the macrocyclic anhydride and release of the products. In Gibberella zeae (strain ATCC MYA-4620 / CBS 123657 / FGSC 9075 / NRRL 31084 / PH-1) (Wheat head blight fungus), this protein is Nonribosomal peptide synthetase GRA1.